A 340-amino-acid chain; its full sequence is N-acetyl-gamma-glutamyl-phosphate reductase (340 aa).

Residue Cys148 is part of the active site.

This sequence belongs to the NAGSA dehydrogenase family. Type 1 subfamily.

The protein resides in the cytoplasm. It carries out the reaction N-acetyl-L-glutamate 5-semialdehyde + phosphate + NADP(+) = N-acetyl-L-glutamyl 5-phosphate + NADPH + H(+). It functions in the pathway amino-acid biosynthesis; L-arginine biosynthesis; N(2)-acetyl-L-ornithine from L-glutamate: step 3/4. Its function is as follows. Catalyzes the NADPH-dependent reduction of N-acetyl-5-glutamyl phosphate to yield N-acetyl-L-glutamate 5-semialdehyde. The sequence is that of N-acetyl-gamma-glutamyl-phosphate reductase from Methanosarcina mazei (strain ATCC BAA-159 / DSM 3647 / Goe1 / Go1 / JCM 11833 / OCM 88) (Methanosarcina frisia).